Reading from the N-terminus, the 605-residue chain is MPNLQLILKTILITELLILALSALMTMLPPILNKLTWDPEKAMTTTFRLSLTSILIHILIEEPSSISSLYSPTMLNLAMSIKIDYYSLIFISIALFITRAILQYTKWYMASDRDLKKFSMFLLLFLMSMIMFIAANNFFPMLVGWGTMGLMSYLLISWWHGRTEATTSGLQAILYNRLADIGFILTFSWCITYMSSLDLNTFFATSTLVTGVPILGMLMAAMGKSAQFGMHPWLPAAMEGPTPVSALLHSSTMVTAGVYLLIGMHPILSQTQGFSEACLTMGAATALYASFKALLQNDLKKIIAFSTLSQLGFMMATVGLNHPNLAFMHLCMHAFFKAMMFLCAGSISHALFGEQDIRKMSGMIKVTPITASCFTLSTLALAGFPFLTGFFSKDLIIETILLSKINMLWATMLLISTMFTAIYSLRMTLRILTGTPWYNDLLTYEENPTCTKPIMKLALASIVTGSLFSLFTPPIYTPLQTMPPTIKLAALTLTFMSAFLAMYLISLANNKPLPKNTIQNHMLQTAKDLKIITHRHLMAKLLKASQKTALQILDNHWKLKAGPKYIEKTQIPMSMKTSTQSGLIKTYFMAFLVTFVIILYIMLFY.

The next 16 membrane-spanning stretches (helical) occupy residues Ile-11–Ile-31, Leu-49–Leu-69, Leu-77–Ile-97, Met-120–Pro-140, Met-141–Gly-161, Leu-178–Asp-198, Phe-202–Met-222, Val-244–Met-264, Gly-273–Leu-295, Ile-302–His-322, Leu-325–Gly-345, Ala-371–Phe-391, Leu-408–Leu-425, Leu-457–Thr-477, Leu-488–Ala-508, and Ile-584–Phe-604.

This sequence belongs to the complex I subunit 5 family.

Its subcellular location is the mitochondrion inner membrane. The enzyme catalyses a ubiquinone + NADH + 5 H(+)(in) = a ubiquinol + NAD(+) + 4 H(+)(out). In terms of biological role, core subunit of the mitochondrial membrane respiratory chain NADH dehydrogenase (Complex I) that is believed to belong to the minimal assembly required for catalysis. Complex I functions in the transfer of electrons from NADH to the respiratory chain. The immediate electron acceptor for the enzyme is believed to be ubiquinone. The sequence is that of NADH-ubiquinone oxidoreductase chain 5 (MT-ND5) from Pelomedusa subrufa (African side-necked turtle).